A 497-amino-acid polypeptide reads, in one-letter code: Aldehyde dehydrogenase (497 aa).

241 to 246 (GSTVVG) serves as a coordination point for NAD(+). Catalysis depends on Glu264, which acts as the Proton acceptor. Residue Cys298 is the Nucleophile of the active site.

It belongs to the aldehyde dehydrogenase family.

The protein localises to the cytoplasm. The enzyme catalyses an aldehyde + NAD(+) + H2O = a carboxylate + NADH + 2 H(+). Its pathway is alcohol metabolism; ethanol degradation; acetate from ethanol: step 2/2. The polypeptide is Aldehyde dehydrogenase (ALTA10) (Alternaria alternata (Alternaria rot fungus)).